Here is a 91-residue protein sequence, read N- to C-terminus: Ixochymostatin (91 aa).

An N-terminal signal peptide occupies residues 1 to 20 (MKTYVLQALLLTLAVAVVRA). 5 cysteine pairs are disulfide-bonded: C34–C70, C43–C66, C48–C62, C53–C90, and C72–C84. The 57-residue stretch at 34-90 (CAEGETWKECVGSSCAELTCEHPEPSLGCTYDCNYGCYCAPDFFRNANKECVKKDKC) folds into the TIL domain.

The protein belongs to the serine protease inhibitor-like (TIL domain-containing) family. As to expression, salivary gland. Midgut.

The protein localises to the secreted. In terms of biological role, tight-binding competitive inhibitor of chymotrypsin-like proteases; inhibits host chymase, cathepsin G (CTSG) and chymotrypsin. Inhibits chymase-mediated generation of vasoconstrictor peptides: angiotensin II and endothelin I. Reduces chymase-mediated vascular permeability and vascular endothelial-cadherin degradation. This Ixodes scapularis (Black-legged tick) protein is Ixochymostatin.